Reading from the N-terminus, the 359-residue chain is Phospho-N-acetylmuramoyl-pentapeptide-transferase (359 aa).

10 helical membrane-spanning segments follow: residues 3 to 23 (QIMI…PALI), 55 to 75 (VAIL…GLAF), 80 to 100 (ITAS…VGFL), 117 to 137 (TAKT…VLQF), 156 to 176 (IATV…VVSA), 187 to 207 (LDGL…LITF), 231 to 251 (LALI…WNAA), 255 to 275 (IFMG…LSVT), 280 to 300 (ILAV…VLQI), and 334 to 354 (FWLL…GEWL).

It belongs to the glycosyltransferase 4 family. MraY subfamily. Mg(2+) serves as cofactor.

The protein localises to the cell membrane. The enzyme catalyses UDP-N-acetyl-alpha-D-muramoyl-L-alanyl-gamma-D-glutamyl-meso-2,6-diaminopimeloyl-D-alanyl-D-alanine + di-trans,octa-cis-undecaprenyl phosphate = di-trans,octa-cis-undecaprenyl diphospho-N-acetyl-alpha-D-muramoyl-L-alanyl-D-glutamyl-meso-2,6-diaminopimeloyl-D-alanyl-D-alanine + UMP. The protein operates within cell wall biogenesis; peptidoglycan biosynthesis. Functionally, catalyzes the initial step of the lipid cycle reactions in the biosynthesis of the cell wall peptidoglycan: transfers peptidoglycan precursor phospho-MurNAc-pentapeptide from UDP-MurNAc-pentapeptide onto the lipid carrier undecaprenyl phosphate, yielding undecaprenyl-pyrophosphoryl-MurNAc-pentapeptide, known as lipid I. This is Phospho-N-acetylmuramoyl-pentapeptide-transferase from Mycobacterium ulcerans (strain Agy99).